Here is a 338-residue protein sequence, read N- to C-terminus: Ketol-acid reductoisomerase (NADP(+)) (338 aa).

Residues 1 to 181 (MQVYYDKDAD…GGGRAGVIET (181 aa)) enclose the KARI N-terminal Rossmann domain. NADP(+)-binding positions include 24-27 (YGSQ), arginine 47, serine 50, serine 52, and 82-85 (DEHQ). Histidine 107 is a catalytic residue. Residue glycine 133 participates in NADP(+) binding. A KARI C-terminal knotted domain is found at 182–327 (SFREETETDL…ERLRGMMPWI (146 aa)). Aspartate 190, glutamate 194, glutamate 226, and glutamate 230 together coordinate Mg(2+). Serine 251 contributes to the substrate binding site.

It belongs to the ketol-acid reductoisomerase family. It depends on Mg(2+) as a cofactor.

The enzyme catalyses (2R)-2,3-dihydroxy-3-methylbutanoate + NADP(+) = (2S)-2-acetolactate + NADPH + H(+). It carries out the reaction (2R,3R)-2,3-dihydroxy-3-methylpentanoate + NADP(+) = (S)-2-ethyl-2-hydroxy-3-oxobutanoate + NADPH + H(+). It functions in the pathway amino-acid biosynthesis; L-isoleucine biosynthesis; L-isoleucine from 2-oxobutanoate: step 2/4. The protein operates within amino-acid biosynthesis; L-valine biosynthesis; L-valine from pyruvate: step 2/4. In terms of biological role, involved in the biosynthesis of branched-chain amino acids (BCAA). Catalyzes an alkyl-migration followed by a ketol-acid reduction of (S)-2-acetolactate (S2AL) to yield (R)-2,3-dihydroxy-isovalerate. In the isomerase reaction, S2AL is rearranged via a Mg-dependent methyl migration to produce 3-hydroxy-3-methyl-2-ketobutyrate (HMKB). In the reductase reaction, this 2-ketoacid undergoes a metal-dependent reduction by NADPH to yield (R)-2,3-dihydroxy-isovalerate. This is Ketol-acid reductoisomerase (NADP(+)) from Alkalilimnicola ehrlichii (strain ATCC BAA-1101 / DSM 17681 / MLHE-1).